Consider the following 105-residue polypeptide: UPF0473 protein SAG2089 (105 aa).

The protein belongs to the UPF0473 family.

This Streptococcus agalactiae serotype V (strain ATCC BAA-611 / 2603 V/R) protein is UPF0473 protein SAG2089.